A 125-amino-acid polypeptide reads, in one-letter code: Small ribosomal subunit protein eS8 (125 aa).

Residues 1–20 (MLWQGESIRKVTGGRRRPAQ) are disordered.

The protein belongs to the eukaryotic ribosomal protein eS8 family. In terms of assembly, part of the 30S ribosomal subunit.

This chain is Small ribosomal subunit protein eS8, found in Methanoregula boonei (strain DSM 21154 / JCM 14090 / 6A8).